A 267-amino-acid chain; its full sequence is Tryptophan synthase alpha chain (267 aa).

Residues Glu49 and Asp60 each act as proton acceptor in the active site.

This sequence belongs to the TrpA family. In terms of assembly, tetramer of two alpha and two beta chains.

It catalyses the reaction (1S,2R)-1-C-(indol-3-yl)glycerol 3-phosphate + L-serine = D-glyceraldehyde 3-phosphate + L-tryptophan + H2O. The protein operates within amino-acid biosynthesis; L-tryptophan biosynthesis; L-tryptophan from chorismate: step 5/5. Its function is as follows. The alpha subunit is responsible for the aldol cleavage of indoleglycerol phosphate to indole and glyceraldehyde 3-phosphate. The chain is Tryptophan synthase alpha chain from Salinispora arenicola (strain CNS-205).